Reading from the N-terminus, the 252-residue chain is Neurovirulence factor ICP34.5 (252 aa).

Residues 1–15 (MARRRRRHRGPRRPR) show a composition bias toward basic residues. The segment at 1 to 17 (MARRRRRHRGPRRPRPP) is required for nucleolar localization. Disordered regions lie at residues 1–129 (MARR…PFRL) and 150–179 (RRAGGEGAPEPPATPATPATPATPATPATP). A compositionally biased stretch (polar residues) spans 25 to 36 (TAQSQVTSTPNS). Over residues 46 to 59 (AAPPPPPAGGPPPS) the composition is skewed to pro residues. Residues 74-84 (ASDDDDDDDWP) are compositionally biased toward acidic residues. Composition is skewed to pro residues over residues 85 to 94 (DSPPPEPAPE) and 120 to 129 (SHPPSRPFRL). The short motif at 129–138 (LPPRLALRLR) is the Nuclear export signal element. 6 tandem repeats follow at residues 162 to 164 (ATP), 165 to 167 (ATP), 168 to 170 (ATP), 171 to 173 (ATP), 174 to 176 (ATP), and 177 to 179 (ATP). The tract at residues 162 to 179 (ATPATPATPATPATPATP) is 6 X 3 AA tandem repeats of A-T-P. Positions 165–179 (ATPATPATPATPATP) are enriched in low complexity. The interval 179-192 (PARVRFSPHVRVRH) is binding to PP1CA. Positions 179-192 (PARVRFSPHVRVRH) are interaction with host PPP1CA. The interval 194–252 (VVWASAARLARRGSWARERADRARFRRRVAEAEAVIGPCLGPKARARALARGAGPANSV) is important for interferon resistance. The Bipartite nuclear localization signal motif lies at 204–222 (RRGSWARERADRARFRRRV). Residues 222 to 237 (VAEAEAVIGPCLGPKA) are interaction with host EIF2S1/EIF-2ALPHA.

Belongs to the PPP1R15 family. In terms of assembly, interacts with host PPP1CA to form a high-molecular-weight complex that dephosphorylates EIF2S1/eIF-2alpha. Interacts with host EIF2S1/eIF-2alpha; this interaction is crucial for the specific dephosphorylation of EIF2S1/eIF-2alpha by PPP1CA. Binds to proliferating cell nuclear antigen (PCNA), which may release host cells from growth arrest and facilitate viral replication. Interacts (via N-terminus) with host C1QBP and PRKCA. Interacts with protein UL31. Interacts with host TBK1. Interacts with host STING/TMEM173; this interaction inhibits the intracellular DNA sensing pathway. Interacts with host BECN1; this interaction modulates host autophagy.

It localises to the host cytoplasm. It is found in the host nucleus. Its subcellular location is the host nucleolus. The protein localises to the virion. Its function is as follows. Inhibits the establishment of the immune response and of the integrated stress response (ISR) in the infected cell. Plays essential roles in viral nuclear egress to mediate capsid transit across the nuclear membrane. Facilitates nuclear egress cooperatively with host C1QBP and protein kinase C/PKC to induce lamin A/C phosphorylation and subsequent reorganization. In turn, lamina disassembles and nuclear egress occurs. Recruits the serine/threonine protein phosphatase PPP1CA/PP1-alpha to dephosphorylate the translation initiation factor EIF2S1/eIF-2alpha, thereby couteracting the host shutoff of protein synthesis involving double-stranded RNA-dependent protein kinase EIF2AK2/PKR. In turn, controls host IRF3 activation and subsequently inhibits host interferon response. Controls the DNA sensing pathway by interacting with and inhibiting host STING/TMEM173. Also down-modulates the host MHC class II proteins cell surface expression. Acts as a neurovirulence factor that has a profound effect on the growth of the virus in central nervous system tissue, by interacting with host BECN1 and thereby antagonizing the host autophagy response. This chain is Neurovirulence factor ICP34.5 (RL1), found in Human herpesvirus 1 (strain CVG-2) (HHV-1).